Reading from the N-terminus, the 99-residue chain is Large ribosomal subunit protein uL23 (99 aa).

This sequence belongs to the universal ribosomal protein uL23 family. As to quaternary structure, part of the 50S ribosomal subunit. Contacts protein L29, and trigger factor when it is bound to the ribosome.

Its function is as follows. One of the early assembly proteins it binds 23S rRNA. One of the proteins that surrounds the polypeptide exit tunnel on the outside of the ribosome. Forms the main docking site for trigger factor binding to the ribosome. The chain is Large ribosomal subunit protein uL23 from Hydrogenobaculum sp. (strain Y04AAS1).